The chain runs to 835 residues: Ubiquitin carboxyl-terminal hydrolase 26 (835 aa).

The disordered stretch occupies residues 102 to 128; that stretch reads SQGSIRPARSDERCGEPSTSAQELNGS. Polar residues predominate over residues 118–128; that stretch reads PSTSAQELNGS. The USP domain maps to 286-816; that stretch reads QGLPNVGNTC…TGYVFFYMHN (531 aa). Cys295 (nucleophile) is an active-site residue. The disordered stretch occupies residues 597–747; that stretch reads NRESEAQSGK…TRKVDPTKLN (151 aa). Basic and acidic residues-rich tracts occupy residues 634-652 and 669-679; these read LTKETEKLKKHEEEHRPSD and KCNEGRSDKQI. Positions 683–708 are enriched in polar residues; the sequence is ALTQSRPKPISQEQTENLGKTTLSHT. The segment covering 709–725 has biased composition (low complexity); that stretch reads QDSSQSSQSSSDSSKSS. Positions 726–747 are enriched in basic and acidic residues; it reads RCSDDLDKKAKPTRKVDPTKLN. His771 (proton acceptor) is an active-site residue.

Belongs to the peptidase C19 family. As to quaternary structure, interacts with RING1.

It is found in the nucleus. Its subcellular location is the cytoplasm. It localises to the cytoskeleton. The protein resides in the flagellum axoneme. The enzyme catalyses Thiol-dependent hydrolysis of ester, thioester, amide, peptide and isopeptide bonds formed by the C-terminal Gly of ubiquitin (a 76-residue protein attached to proteins as an intracellular targeting signal).. In terms of biological role, deubiquitinase regulating several biological processes through the deubiquitination of components of these processes. Involved in somatic cell reprogramming through the 'Lys-48'-linked deubiquitination and stabilization of CBX4 and CBX6, two components of the polycomb-repressive complex 1 (PRC1). Also deubiquitinates and probably stabilizes the androgen receptor (AR), regulating the androgen receptor signaling pathway. May play a role in spermatogenesis. The sequence is that of Ubiquitin carboxyl-terminal hydrolase 26 from Mus musculus (Mouse).